The primary structure comprises 606 residues: NADH-ubiquinone oxidoreductase chain 5 (606 aa).

The next 16 helical transmembrane spans lie at 4-24 (FSSL…SSIL), 38-58 (NIIS…IHSG), 87-107 (MIFV…SLWY), 117-137 (FFKY…ANNL), 140-160 (LFIG…WWYG), 171-191 (AILY…WFLF), 211-233 (LPLL…HPWL), 241-261 (TPVS…FLLI), 273-293 (IQSL…ICAL), 301-320 (IIAF…IGIN), 325-347 (AFLH…GSII), 366-386 (MPFT…MPFL), 413-433 (LIAT…ALLG), 457-477 (LLIG…PTTI), 488-508 (LTAL…SLIT), and 584-604 (IKLY…LFNL).

Belongs to the complex I subunit 5 family. As to quaternary structure, core subunit of respiratory chain NADH dehydrogenase (Complex I) which is composed of 45 different subunits.

The protein resides in the mitochondrion inner membrane. It carries out the reaction a ubiquinone + NADH + 5 H(+)(in) = a ubiquinol + NAD(+) + 4 H(+)(out). In terms of biological role, core subunit of the mitochondrial membrane respiratory chain NADH dehydrogenase (Complex I) which catalyzes electron transfer from NADH through the respiratory chain, using ubiquinone as an electron acceptor. Essential for the catalytic activity and assembly of complex I. This chain is NADH-ubiquinone oxidoreductase chain 5 (MT-ND5), found in Equus asinus (Donkey).